Consider the following 246-residue polypeptide: Adenosylcobinamide-GDP ribazoletransferase (246 aa).

6 helical membrane-spanning segments follow: residues 34 to 54, 59 to 79, 113 to 133, 136 to 156, 181 to 201, and 203 to 223; these read IVTF…VALL, CGVP…TGGF, GGLA…ELLL, IHPI…AALL, TLVT…LQGL, and AALI…RTLG.

It belongs to the CobS family. The cofactor is Mg(2+).

It is found in the cell inner membrane. The enzyme catalyses alpha-ribazole + adenosylcob(III)inamide-GDP = adenosylcob(III)alamin + GMP + H(+). The catalysed reaction is alpha-ribazole 5'-phosphate + adenosylcob(III)inamide-GDP = adenosylcob(III)alamin 5'-phosphate + GMP + H(+). Its pathway is cofactor biosynthesis; adenosylcobalamin biosynthesis; adenosylcobalamin from cob(II)yrinate a,c-diamide: step 7/7. In terms of biological role, joins adenosylcobinamide-GDP and alpha-ribazole to generate adenosylcobalamin (Ado-cobalamin). Also synthesizes adenosylcobalamin 5'-phosphate from adenosylcobinamide-GDP and alpha-ribazole 5'-phosphate. This is Adenosylcobinamide-GDP ribazoletransferase from Klebsiella pneumoniae subsp. pneumoniae (strain ATCC 700721 / MGH 78578).